The chain runs to 427 residues: MSVSFENTATNRGVVTFTIGQDKIQPALDQAFNKIKKNLNVPGFRKGHIPRAVFNQKFGEEALYDDALNAILPAAYEAAIAELGLDVVAQPKIDVKSIGKGQDWTLTAEVVTKPEVKLGAYKDLEVSVEVSKEVTDEEVDAKLENERKNLAELIVKDGAAEYGDTVVIDFVGSVDGVEFDGGKGENHSLELGSGQFIPGFEDQLVGAKSGDEVEVKVTFPEDYQATDLAGKAAVFVTKVNEVKAKEVPALDDELAKDLDDEVDTLDELKAKYRKELEAAKEIAFDDAVEGAALDLAVENAEIVELPAEMVENEVHRAMNEFMGNLQRQGISPEMYFQITGTTQEDLRKQYEADSDKRVKTNLVIEAVAAAEGFDATDEEIQKEINDLAAEYNMEVSQVSELLSPEMLKHDIAMKKAVEVITSSAKVK.

In terms of domain architecture, PPIase FKBP-type spans 163–248; that stretch reads GDTVVIDFVG…VNEVKAKEVP (86 aa).

It belongs to the FKBP-type PPIase family. Tig subfamily.

It localises to the cytoplasm. It catalyses the reaction [protein]-peptidylproline (omega=180) = [protein]-peptidylproline (omega=0). In terms of biological role, involved in protein export. Acts as a chaperone by maintaining the newly synthesized protein in an open conformation. Functions as a peptidyl-prolyl cis-trans isomerase. This chain is Trigger factor, found in Streptococcus thermophilus (strain CNRZ 1066).